The chain runs to 525 residues: GMP synthase [glutamine-hydrolyzing] (525 aa).

The Glutamine amidotransferase type-1 domain maps to Arg9–Leu207. Catalysis depends on Cys86, which acts as the Nucleophile. Active-site residues include His181 and Glu183. The region spanning Trp208–Arg400 is the GMPS ATP-PPase domain. Ser235–Ser241 provides a ligand contact to ATP.

Homodimer.

The enzyme catalyses XMP + L-glutamine + ATP + H2O = GMP + L-glutamate + AMP + diphosphate + 2 H(+). The protein operates within purine metabolism; GMP biosynthesis; GMP from XMP (L-Gln route): step 1/1. In terms of biological role, catalyzes the synthesis of GMP from XMP. In Teredinibacter turnerae (strain ATCC 39867 / T7901), this protein is GMP synthase [glutamine-hydrolyzing].